Here is a 68-residue protein sequence, read N- to C-terminus: Metallothionein (68 aa).

The protein belongs to the metallothionein superfamily. Type 4 family.

In terms of biological role, metallothioneins have a high content of cysteine residues that bind various heavy metals. The sequence is that of Metallothionein (MT1) from Lytechinus pictus (Painted sea urchin).